Reading from the N-terminus, the 561-residue chain is Potassium-transporting ATPase potassium-binding subunit (561 aa).

The next 10 helical transmembrane spans lie at 4–24, 65–85, 133–153, 177–197, 253–273, 285–305, 380–400, 417–437, 484–504, and 528–548; these read IVMQDVFFVVLLLVLAVPLGI, AVSVLAFSAVGFVFVMAVLML, IGLTVQNFVSAATGIAVLFAV, LYILLPLSLVLALLLVSQGVV, FTNLIEMLAILLIPVALVVMF, AIMTAMMIVFVIGVVAITISE, GLYGMIGFIILTVFIAGLLVG, MVCLLILVPPLLTLFGTAVAV, MVGAVMMLLARFIPLVAALYL, and FIGLLIGVVVLVGALSFLPAL.

The protein belongs to the KdpA family. As to quaternary structure, the system is composed of three essential subunits: KdpA, KdpB and KdpC.

The protein resides in the cell membrane. In terms of biological role, part of the high-affinity ATP-driven potassium transport (or Kdp) system, which catalyzes the hydrolysis of ATP coupled with the electrogenic transport of potassium into the cytoplasm. This subunit binds the extracellular potassium ions and delivers the ions to the membrane domain of KdpB through an intramembrane tunnel. The protein is Potassium-transporting ATPase potassium-binding subunit of Listeria monocytogenes serotype 4a (strain HCC23).